The chain runs to 449 residues: UDP-N-acetylmuramoylalanine--D-glutamate ligase (449 aa).

117–123 (GSNGKTT) is an ATP binding site.

Belongs to the MurCDEF family.

The protein localises to the cytoplasm. The catalysed reaction is UDP-N-acetyl-alpha-D-muramoyl-L-alanine + D-glutamate + ATP = UDP-N-acetyl-alpha-D-muramoyl-L-alanyl-D-glutamate + ADP + phosphate + H(+). Its pathway is cell wall biogenesis; peptidoglycan biosynthesis. Its function is as follows. Cell wall formation. Catalyzes the addition of glutamate to the nucleotide precursor UDP-N-acetylmuramoyl-L-alanine (UMA). This Exiguobacterium sibiricum (strain DSM 17290 / CCUG 55495 / CIP 109462 / JCM 13490 / 255-15) protein is UDP-N-acetylmuramoylalanine--D-glutamate ligase.